A 290-amino-acid chain; its full sequence is Agroclavine dehydrogenase (290 aa).

The protein belongs to the fgaFS/easG family. Monomer.

The catalysed reaction is agroclavine + NADP(+) = didehydroagroclavine + NADPH + H(+). It participates in alkaloid biosynthesis; ergot alkaloid biosynthesis. Functionally, agroclavine dehydrogenase; part of the gene cluster that mediates the biosynthesis of fungal ergot alkaloid. DmaW catalyzes the first step of ergot alkaloid biosynthesis by condensing dimethylallyl diphosphate (DMAP) and tryptophan to form 4-dimethylallyl-L-tryptophan. The second step is catalyzed by the methyltransferase easF that methylates 4-dimethylallyl-L-tryptophan in the presence of S-adenosyl-L-methionine, resulting in the formation of 4-dimethylallyl-L-abrine. The catalase easC and the FAD-dependent oxidoreductase easE then transform 4-dimethylallyl-L-abrine to chanoclavine-I which is further oxidized by easD in the presence of NAD(+), resulting in the formation of chanoclavine-I aldehyde. Agroclavine dehydrogenase easG then mediates the conversion of chanoclavine-I aldehyde to agroclavine via a non-enzymatic adduct reaction: the substrate is an iminium intermediate that is formed spontaneously from chanoclavine-I aldehyde in the presence of glutathione. The presence of easA is not required to complete this reaction. Further conversion of agroclavine to paspalic acid is a two-step process involving oxidation of agroclavine to elymoclavine and of elymoclavine to paspalic acid, the second step being performed by the elymoclavine oxidase cloA. Paspalic acid is then further converted to D-lysergic acid. Ergopeptines are assembled from D-lysergic acid and three different amino acids by the D-lysergyl-peptide-synthetases composed each of a monomudular and a trimodular nonribosomal peptide synthetase subunit. LpsB and lpsC encode the monomodular subunits responsible for D-lysergic acid activation and incorporation into the ergopeptine backbone. LpsA1 and A2 subunits encode the trimodular nonribosomal peptide synthetase assembling the tripeptide portion of ergopeptines. LpsA1 is responsible for formation of the major ergopeptine, ergotamine, and lpsA2 for alpha-ergocryptine, the minor ergopeptine of the total alkaloid mixture elaborated by C.purpurea. D-lysergyl-tripeptides are assembled by the nonribosomal peptide synthetases and released as N-(D-lysergyl-aminoacyl)-lactams. Cyclolization of the D-lysergyl-tripeptides is performed by the Fe(2+)/2-ketoglutarate-dependent dioxygenase easH which introduces a hydroxyl group into N-(D-lysergyl-aminoacyl)-lactam at alpha-C of the aminoacyl residue followed by spontaneous condensation with the terminal lactam carbonyl group. This Claviceps purpurea (strain 20.1) (Ergot fungus) protein is Agroclavine dehydrogenase.